The following is a 469-amino-acid chain: Argininosuccinate lyase (469 aa).

The protein belongs to the lyase 1 family. Argininosuccinate lyase subfamily.

The protein resides in the cytoplasm. It catalyses the reaction 2-(N(omega)-L-arginino)succinate = fumarate + L-arginine. The protein operates within amino-acid biosynthesis; L-arginine biosynthesis; L-arginine from L-ornithine and carbamoyl phosphate: step 3/3. This chain is Argininosuccinate lyase, found in Burkholderia cenocepacia (strain ATCC BAA-245 / DSM 16553 / LMG 16656 / NCTC 13227 / J2315 / CF5610) (Burkholderia cepacia (strain J2315)).